We begin with the raw amino-acid sequence, 1386 residues long: DNA-directed RNA polymerase subunit beta'' (1386 aa).

Zn(2+) contacts are provided by Cys-220, Cys-289, Cys-296, and Cys-299.

Belongs to the RNA polymerase beta' chain family. RpoC2 subfamily. As to quaternary structure, in plastids the minimal PEP RNA polymerase catalytic core is composed of four subunits: alpha, beta, beta', and beta''. When a (nuclear-encoded) sigma factor is associated with the core the holoenzyme is formed, which can initiate transcription. Zn(2+) serves as cofactor.

The protein localises to the plastid. It is found in the chloroplast. It carries out the reaction RNA(n) + a ribonucleoside 5'-triphosphate = RNA(n+1) + diphosphate. DNA-dependent RNA polymerase catalyzes the transcription of DNA into RNA using the four ribonucleoside triphosphates as substrates. The polypeptide is DNA-directed RNA polymerase subunit beta'' (Marchantia polymorpha (Common liverwort)).